Here is a 247-residue protein sequence, read N- to C-terminus: ATP synthase subunit a, chloroplastic (247 aa).

A run of 5 helical transmembrane segments spans residues 38 to 58 (QVLI…IVTV), 95 to 115 (VPFI…GALL), 134 to 154 (INTT…AGLS), 199 to 219 (LVVV…VMFL), and 220 to 240 (GLFT…AYIG).

This sequence belongs to the ATPase A chain family. In terms of assembly, F-type ATPases have 2 components, CF(1) - the catalytic core - and CF(0) - the membrane proton channel. CF(1) has five subunits: alpha(3), beta(3), gamma(1), delta(1), epsilon(1). CF(0) has four main subunits: a, b, b' and c.

The protein resides in the plastid. Its subcellular location is the chloroplast thylakoid membrane. Its function is as follows. Key component of the proton channel; it plays a direct role in the translocation of protons across the membrane. This is ATP synthase subunit a, chloroplastic from Populus alba (White poplar).